Here is an 86-residue protein sequence, read N- to C-terminus: Small ribosomal subunit protein bS20 (86 aa).

Positions 1-27 (MANSKSAKKRATQAERRRQHNASRRSM) are enriched in basic residues. The tract at residues 1–28 (MANSKSAKKRATQAERRRQHNASRRSMM) is disordered.

The protein belongs to the bacterial ribosomal protein bS20 family.

Binds directly to 16S ribosomal RNA. The sequence is that of Small ribosomal subunit protein bS20 from Aliivibrio salmonicida (strain LFI1238) (Vibrio salmonicida (strain LFI1238)).